Reading from the N-terminus, the 367-residue chain is 4-hydroxy-3-methylbut-2-en-1-yl diphosphate synthase (flavodoxin) (367 aa).

[4Fe-4S] cluster-binding residues include Cys-265, Cys-268, Cys-300, and Glu-307.

This sequence belongs to the IspG family. Requires [4Fe-4S] cluster as cofactor.

The catalysed reaction is (2E)-4-hydroxy-3-methylbut-2-enyl diphosphate + oxidized [flavodoxin] + H2O + 2 H(+) = 2-C-methyl-D-erythritol 2,4-cyclic diphosphate + reduced [flavodoxin]. It participates in isoprenoid biosynthesis; isopentenyl diphosphate biosynthesis via DXP pathway; isopentenyl diphosphate from 1-deoxy-D-xylulose 5-phosphate: step 5/6. Functionally, converts 2C-methyl-D-erythritol 2,4-cyclodiphosphate (ME-2,4cPP) into 1-hydroxy-2-methyl-2-(E)-butenyl 4-diphosphate. The polypeptide is 4-hydroxy-3-methylbut-2-en-1-yl diphosphate synthase (flavodoxin) (Bacillus cereus (strain ATCC 10987 / NRS 248)).